We begin with the raw amino-acid sequence, 320 residues long: Malate dehydrogenase (320 aa).

NAD(+)-binding positions include 10-15 (GAGQIG) and aspartate 34. Residues arginine 83 and arginine 89 each coordinate substrate. NAD(+)-binding positions include asparagine 96 and 119–121 (ITN). Positions 121 and 152 each coordinate substrate. Histidine 176 functions as the Proton acceptor in the catalytic mechanism.

The protein belongs to the LDH/MDH superfamily. MDH type 3 family.

The catalysed reaction is (S)-malate + NAD(+) = oxaloacetate + NADH + H(+). In terms of biological role, catalyzes the reversible oxidation of malate to oxaloacetate. The polypeptide is Malate dehydrogenase (Cereibacter sphaeroides (strain ATCC 17029 / ATH 2.4.9) (Rhodobacter sphaeroides)).